Reading from the N-terminus, the 236-residue chain is Phosphoribosylaminoimidazole-succinocarboxamide synthase (236 aa).

This sequence belongs to the SAICAR synthetase family.

The enzyme catalyses 5-amino-1-(5-phospho-D-ribosyl)imidazole-4-carboxylate + L-aspartate + ATP = (2S)-2-[5-amino-1-(5-phospho-beta-D-ribosyl)imidazole-4-carboxamido]succinate + ADP + phosphate + 2 H(+). It functions in the pathway purine metabolism; IMP biosynthesis via de novo pathway; 5-amino-1-(5-phospho-D-ribosyl)imidazole-4-carboxamide from 5-amino-1-(5-phospho-D-ribosyl)imidazole-4-carboxylate: step 1/2. This chain is Phosphoribosylaminoimidazole-succinocarboxamide synthase, found in Pseudomonas syringae pv. syringae (strain B728a).